A 418-amino-acid polypeptide reads, in one-letter code: GTPase Obg (418 aa).

Positions 1–156 (MKFIDEITLN…KKLTLVLKVL (156 aa)) constitute an Obg domain. Positions 157–324 (ADVGFVGKPS…LKEALWQSVK (168 aa)) constitute an OBG-type G domain. GTP contacts are provided by residues 163–170 (GKPSAGKS), 188–192 (FTTLV), 209–212 (DLPG), 278–281 (NKKD), and 305–307 (SAL). Positions 170 and 190 each coordinate Mg(2+). The 79-residue stretch at 339–417 (VFINFEADFN…IYDYEFVWGN (79 aa)) folds into the OCT domain.

This sequence belongs to the TRAFAC class OBG-HflX-like GTPase superfamily. OBG GTPase family. In terms of assembly, monomer. Requires Mg(2+) as cofactor.

The protein localises to the cytoplasm. In terms of biological role, an essential GTPase which binds GTP, GDP and possibly (p)ppGpp with moderate affinity, with high nucleotide exchange rates and a fairly low GTP hydrolysis rate. Plays a role in control of the cell cycle, stress response, ribosome biogenesis and in those bacteria that undergo differentiation, in morphogenesis control. This is GTPase Obg from Mycoplasmopsis pulmonis (strain UAB CTIP) (Mycoplasma pulmonis).